Reading from the N-terminus, the 254-residue chain is Phosphomannomutase (254 aa).

The active-site Nucleophile is Asp19. Residues Asp19 and Asp21 each coordinate Mg(2+). The Proton donor/acceptor role is filled by Asp21. Positions 28, 130, 141, 148, 186, and 188 each coordinate alpha-D-mannose 1-phosphate. Positions 216, 228, 230, and 233 each coordinate Mg(2+). Ser240 is subject to Phosphoserine.

The protein belongs to the eukaryotic PMM family. In terms of assembly, homodimer.

The protein localises to the cytoplasm. It carries out the reaction alpha-D-mannose 1-phosphate = D-mannose 6-phosphate. Its pathway is nucleotide-sugar biosynthesis; GDP-alpha-D-mannose biosynthesis; alpha-D-mannose 1-phosphate from D-fructose 6-phosphate: step 2/2. Involved in the synthesis of the GDP-mannose and dolichol-phosphate-mannose required for a number of critical mannosyl transfer reactions such as folding and glycosylation of secretory proteins in the ER lumen. The chain is Phosphomannomutase from Saccharomyces cerevisiae (strain ATCC 204508 / S288c) (Baker's yeast).